The primary structure comprises 156 residues: Small ribosomal subunit protein uS7 (156 aa).

This sequence belongs to the universal ribosomal protein uS7 family. In terms of assembly, part of the 30S ribosomal subunit. Contacts proteins S9 and S11.

Its function is as follows. One of the primary rRNA binding proteins, it binds directly to 16S rRNA where it nucleates assembly of the head domain of the 30S subunit. Is located at the subunit interface close to the decoding center, probably blocks exit of the E-site tRNA. This chain is Small ribosomal subunit protein uS7, found in Campylobacter hominis (strain ATCC BAA-381 / DSM 21671 / CCUG 45161 / LMG 19568 / NCTC 13146 / CH001A).